Here is a 365-residue protein sequence, read N- to C-terminus: Histidinol-phosphate aminotransferase (365 aa).

K220 carries the post-translational modification N6-(pyridoxal phosphate)lysine.

Belongs to the class-II pyridoxal-phosphate-dependent aminotransferase family. Histidinol-phosphate aminotransferase subfamily. As to quaternary structure, homodimer. Pyridoxal 5'-phosphate serves as cofactor.

The catalysed reaction is L-histidinol phosphate + 2-oxoglutarate = 3-(imidazol-4-yl)-2-oxopropyl phosphate + L-glutamate. It participates in amino-acid biosynthesis; L-histidine biosynthesis; L-histidine from 5-phospho-alpha-D-ribose 1-diphosphate: step 7/9. The protein is Histidinol-phosphate aminotransferase (hisC) of Xylella fastidiosa (strain Temecula1 / ATCC 700964).